The following is a 1849-amino-acid chain: Brefeldin A-inhibited guanine nucleotide-exchange protein 1 (1849 aa).

The segment at Y2 to R224 is DCB; DCB:DCB and DCB:HUS domain interaction. Residues A46–A58 are compositionally biased toward basic and acidic residues. 3 disordered regions span residues A46–L65, E216–A301, and I350–A413. A phosphoserine mark is found at S52, S286, S289, and S290. 2 stretches are compositionally biased toward polar residues: residues I350–T360 and S394–P409. A phosphoserine mark is found at S397 and S410. The HUS; DCB:HUS domain interaction stretch occupies residues A557–N577. Positions P634 to D687 are disordered. A compositionally biased stretch (basic and acidic residues) spans K644 to T658. A compositionally biased stretch (low complexity) spans S664–S684. In terms of domain architecture, SEC7 spans F709–S840. Residues K711–R715 carry the Nuclear localization signal (NLS) motif. Phosphoserine occurs at positions 1079, 1566, and 1569.

As to quaternary structure, homodimer. Interacts with ARFGEF2/BIG2; both proteins are probably part of the same or very similar macromolecular complexes. Interacts with FKBP2. Interacts with MYO9B. Interacts with PRKAR1A and PRKAR2A. Interacts with PPP1CC. Interacts with NCL, FBL, NUP62 and U3 small nucleolar RNA. Interacts with DPY30. Interacts with PDE3A. Interacts with KANK1. Interacts with TBC1D22A and TBC1D22B. Post-translationally, phosphorylated. In vitro phosphorylated by PKA reducing its GEF activity and dephosphorylated by phosphatase PP1. In terms of tissue distribution, abundantly expressed in kidney, somewhat less abundant in lung, spleen, and brain, and still less abundant in heart.

It localises to the cytoplasm. The protein localises to the perinuclear region. It is found in the golgi apparatus. Its subcellular location is the trans-Golgi network. The protein resides in the nucleus. It localises to the nucleolus. The protein localises to the nucleus matrix. It is found in the membrane. Inhibited by brefeldin A. Promotes guanine-nucleotide exchange on ARF1 and ARF3. Promotes the activation of ARF1/ARF3 through replacement of GDP with GTP. Involved in vesicular trafficking. Required for the maintenance of Golgi structure; the function may be independent of its GEF activity. Required for the maturation of integrin beta-1 in the Golgi. Involved in the establishment and persistence of cell polarity during directed cell movement in wound healing. Proposed to act as A kinase-anchoring protein (AKAP) and may mediate crosstalk between Arf and PKA pathways. Inhibits GAP activity of MYO9B probably through competitive RhoA binding. The function in the nucleus remains to be determined. The protein is Brefeldin A-inhibited guanine nucleotide-exchange protein 1 (ARFGEF1) of Bos taurus (Bovine).